We begin with the raw amino-acid sequence, 290 residues long: Undecaprenyl-diphosphatase 2 (290 aa).

6 helical membrane passes run 104–124 (WMVI…KDLI), 128–148 (LRNL…FILA), 174–194 (CLAL…GLFL), 205–225 (SFLL…PDAF), 237–257 (QLFV…AWLL), and 268–288 (FALW…FGVL).

The protein belongs to the UppP family.

It localises to the cell membrane. It carries out the reaction di-trans,octa-cis-undecaprenyl diphosphate + H2O = di-trans,octa-cis-undecaprenyl phosphate + phosphate + H(+). Catalyzes the dephosphorylation of undecaprenyl diphosphate (UPP). Confers resistance to bacitracin. The polypeptide is Undecaprenyl-diphosphatase 2 (Corynebacterium jeikeium (strain K411)).